Consider the following 90-residue polypeptide: Co-chaperonin GroES (90 aa).

Belongs to the GroES chaperonin family. Heptamer of 7 subunits arranged in a ring. Interacts with the chaperonin GroEL.

It is found in the cytoplasm. Together with the chaperonin GroEL, plays an essential role in assisting protein folding. The GroEL-GroES system forms a nano-cage that allows encapsulation of the non-native substrate proteins and provides a physical environment optimized to promote and accelerate protein folding. GroES binds to the apical surface of the GroEL ring, thereby capping the opening of the GroEL channel. The polypeptide is Co-chaperonin GroES (Borreliella burgdorferi (strain ATCC 35210 / DSM 4680 / CIP 102532 / B31) (Borrelia burgdorferi)).